A 214-amino-acid polypeptide reads, in one-letter code: Thiamine-phosphate synthase (214 aa).

4-amino-2-methyl-5-(diphosphooxymethyl)pyrimidine-binding positions include 39–43 (QYRFK) and asparagine 71. Residues aspartate 72 and aspartate 91 each coordinate Mg(2+). Serine 110 provides a ligand contact to 4-amino-2-methyl-5-(diphosphooxymethyl)pyrimidine. 136–138 (TKT) contributes to the 2-[(2R,5Z)-2-carboxy-4-methylthiazol-5(2H)-ylidene]ethyl phosphate binding site. Residue lysine 139 participates in 4-amino-2-methyl-5-(diphosphooxymethyl)pyrimidine binding. Residues glycine 166 and 186 to 187 (VS) each bind 2-[(2R,5Z)-2-carboxy-4-methylthiazol-5(2H)-ylidene]ethyl phosphate.

It belongs to the thiamine-phosphate synthase family. Requires Mg(2+) as cofactor.

It catalyses the reaction 2-[(2R,5Z)-2-carboxy-4-methylthiazol-5(2H)-ylidene]ethyl phosphate + 4-amino-2-methyl-5-(diphosphooxymethyl)pyrimidine + 2 H(+) = thiamine phosphate + CO2 + diphosphate. The enzyme catalyses 2-(2-carboxy-4-methylthiazol-5-yl)ethyl phosphate + 4-amino-2-methyl-5-(diphosphooxymethyl)pyrimidine + 2 H(+) = thiamine phosphate + CO2 + diphosphate. It carries out the reaction 4-methyl-5-(2-phosphooxyethyl)-thiazole + 4-amino-2-methyl-5-(diphosphooxymethyl)pyrimidine + H(+) = thiamine phosphate + diphosphate. It functions in the pathway cofactor biosynthesis; thiamine diphosphate biosynthesis; thiamine phosphate from 4-amino-2-methyl-5-diphosphomethylpyrimidine and 4-methyl-5-(2-phosphoethyl)-thiazole: step 1/1. Condenses 4-methyl-5-(beta-hydroxyethyl)thiazole monophosphate (THZ-P) and 2-methyl-4-amino-5-hydroxymethyl pyrimidine pyrophosphate (HMP-PP) to form thiamine monophosphate (TMP). In Hydrogenobaculum sp. (strain Y04AAS1), this protein is Thiamine-phosphate synthase.